The following is a 1188-amino-acid chain: MEPNSLQWVGSPCGLHGPYIFYKAFQFHLEGKPRILSLGDFFFVRCTPKDPICIAELQLLWEERTSRQLLSSSKLYFLPEDTPQGRNSDHGEDEVIAVSEKVIVKLEDLVKWVHSDFSKWRCGFHAGPVKTEALGRNGQKEALLKYRQSTLNSGLNFKDVLKEKADLGEDEEETNVIVLSYPQYCRYRSMLKRIQDKPSSILTDQFALALGGIAVVSRNPQILYCRDTFDHPTLIENESICDEFAPNLKGRPRKKKPCPQRRDSFSGVKDSNNNSDGKAVAKVKCEARSALTKPKNNHNCKKVSNEEKPKVAIGEECRADEQAFLVALYKYMKERKTPIERIPYLGFKQINLWTMFQAAQKLGGYETITARRQWKHIYDELGGNPGSTSAATCTRRHYERLILPYERFIKGEEDKPLPPIKPRKQENSSQENENKTKVSGTKRIKHEIPKSKKEKENAPKPQDAAEVSSEQEKEQETLISQKSIPEPLPAADMKKKIEGYQEFSAKPLASRVDPEKDNETDQGSNSEKVAEEAGEKGPTPPLPSAPLAPEKDSALVPGASKQPLTSPSALVDSKQESKLCCFTESPESEPQEASFPSFPTTQPPLANQNETEDDKLPAMADYIANCTVKVDQLGSDDIHNALKQTPKVLVVQSFDMFKDKDLTGPMNENHGLNYTPLLYSRGNPGIMSPLAKKKLLSQVSGASLSSSYPYGSPPPLISKKKLIARDDLCSSLSQTHHGQSTDHMAVSRPSVIQHVQSFRSKPSEERKTINDIFKHEKLSRSDPHRCSFSKHHLNPLADSYVLKQEIQEGKDKLLEKRALPHSHMPSFLADFYSSPHLHSLYRHTEHHLHNEQTSKYPSRDMYRESENSSFPSHRHQEKLHVNYLTSLHLQDKKSAAAEAPTDDQPTDLSLPKNPHKPTGKVLGLAHSTTGPQESKGISQFQVLGSQSRDCHPKACRVSPMTMSGPKKYPESLSRSGKPHHVRLENFRKMEGMVHPILHRKMSPQNIGAARPIKRSLEDLDLVIAGKKARAVSPLDPSKEVSGKEKASEQESEGSKAAHGGHSGGGSEGHKLPLSSPIFPGLYSGSLCNSGLNSRLPAGYSHSLQYLKNQTVLSPLMQPLAFHSLVMQRGIFTSPTNSQQLYRHLAAATPVGSSYGDLLHNSIYPLAAINPQAAFPSSQLSSVHPSTKL.

Residue K130 forms a Glycyl lysine isopeptide (Lys-Gly) (interchain with G-Cter in SUMO2) linkage. A disordered region spans residues 251-277 (RPRKKKPCPQRRDSFSGVKDSNNNSDG). The residue at position 264 (S264) is a Phosphoserine. In terms of domain architecture, ARID spans 318–410 (RADEQAFLVA…LILPYERFIK (93 aa)). An N6,N6-dimethyllysine modification is found at K336. A disordered region spans residues 412 to 611 (EEDKPLPPIK…QPPLANQNET (200 aa)). K445 is covalently cross-linked (Glycyl lysine isopeptide (Lys-Gly) (interchain with G-Cter in SUMO2)). Residues 446-458 (HEIPKSKKEKENA) are compositionally biased toward basic and acidic residues. Glycyl lysine isopeptide (Lys-Gly) (interchain with G-Cter in SUMO2) cross-links involve residues K494 and K496. A compositionally biased stretch (polar residues) spans 597–609 (SFPTTQPPLANQN). Residues K767, K774, K803, and K810 each participate in a glycyl lysine isopeptide (Lys-Gly) (interchain with G-Cter in SUMO2) cross-link. Disordered stretches follow at residues 846–874 (HHLH…PSHR) and 891–918 (DKKS…HKPT). A compositionally biased stretch (basic and acidic residues) spans 847 to 866 (HLHNEQTSKYPSRDMYRESE). Glycyl lysine isopeptide (Lys-Gly) (interchain with G-Cter in SUMO2) cross-links involve residues K893, K916, K920, and K935. A disordered region spans residues 956–978 (RVSPMTMSGPKKYPESLSRSGKP). Glycyl lysine isopeptide (Lys-Gly) (interchain with G-Cter in SUMO2) cross-links involve residues K988, K1000, and K1013. The tract at residues 1028 to 1070 (ARAVSPLDPSKEVSGKEKASEQESEGSKAAHGGHSGGGSEGHK) is disordered. At S1032 the chain carries Phosphoserine. A compositionally biased stretch (basic and acidic residues) spans 1036–1055 (PSKEVSGKEKASEQESEGSK). Residues K1055 and K1070 each participate in a glycyl lysine isopeptide (Lys-Gly) (interchain with G-Cter in SUMO2) cross-link. S1133 carries the post-translational modification Phosphoserine.

The protein belongs to the ARID5B family. Post-translationally, methylation at Lys-336 prevents DNA-binding. Demethylation by PHF2 promotes recruitment of the PHF2-ARID5B complex to promoters. Widely expressed, including in liver (at protein level).

The protein localises to the nucleus. Functionally, transcription coactivator that binds to the 5'-AATA[CT]-3' core sequence and plays a key role in adipogenesis and liver development. Acts by forming a complex with phosphorylated PHF2, which mediates demethylation at Lys-336, leading to target the PHF2-ARID5B complex to target promoters, where PHF2 mediates demethylation of dimethylated 'Lys-9' of histone H3 (H3K9me2), followed by transcription activation of target genes. The PHF2-ARID5B complex acts as a coactivator of HNF4A in liver. Required for adipogenesis: regulates triglyceride metabolism in adipocytes by regulating expression of adipogenic genes. Overexpression leads to induction of smooth muscle marker genes, suggesting that it may also act as a regulator of smooth muscle cell differentiation and proliferation. Represses the cytomegalovirus enhancer. The polypeptide is AT-rich interactive domain-containing protein 5B (ARID5B) (Homo sapiens (Human)).